The sequence spans 464 residues: Chitotriosidase-1 (464 aa).

Residues 1–21 (MVQSLAWAGVMTLLMVQWGSA) form the signal peptide. One can recognise a GH18 domain in the interval 22–386 (AKLVCYLTNW…RTLRQELNLP (365 aa)). Cys-26 and Cys-51 are disulfide-bonded. Chitin contacts are provided by residues 70 to 71 (EH) and 97 to 100 (GGWT). Glu-140 serves as the catalytic Proton donor. 210–213 (MAYD) contacts chitin. A disulfide bridge connects residues Cys-307 and Cys-368. The interval 385 to 416 (LPSETPRSPEQIIPEPRPSSMPEQGPSPGLDN) is disordered. One can recognise a Chitin-binding type-2 domain in the interval 415–464 (DNFCQGKADGVYPNPGDESTYYNCGGGRLFQQSCPPGLVFRASCKCCTWS). A disulfide bridge connects residues Cys-448 and Cys-461.

Belongs to the glycosyl hydrolase 18 family. Chitinase class II subfamily. In terms of assembly, monomer. In terms of tissue distribution, highly expressed in tongue, stomach, kidney, brain, skin, testis, and bone marrow. Low level of expression was found in lung, heart, spleen, small intestine, and liver. Not detectable in pancreas, salivary gland, large intestine, uterus, or peripheral blood mononuclear cells (PBMC).

Its subcellular location is the secreted. The protein resides in the lysosome. It carries out the reaction Random endo-hydrolysis of N-acetyl-beta-D-glucosaminide (1-&gt;4)-beta-linkages in chitin and chitodextrins.. Functionally, degrades chitin, chitotriose and chitobiose. May participate in the defense against nematodes and other pathogens. This Mus musculus (Mouse) protein is Chitotriosidase-1 (Chit1).